The sequence spans 295 residues: MEYIKTATEVYILKIIGGPASQLLASRTARALGTEPVLCEFNRFPDGELYLRIAEEIENEKVTLIQSTPTDSDFVALLQLIDACEGAAEINVVIPYMGYARQDKKFKSGEPVSARAIARCINADRVFTINIHEKSVLEHFPCPAENLDAAALIGSYVAGFGLERPMLVAPDEGARGLVKNVASGHGFDHDHLQKTRLSGDTVVIKTKNLDVTGRHVVLVDDMIATGGTMAESIRMLKSQGAIDVHLACVHPVLTRNAALRLFHAGVKDIIGTDTLEKAESKLSVAPLIAEALSGY.

Residues 46 to 48 (DGE) and 101 to 102 (RQ) contribute to the ATP site. Mg(2+) is bound by residues H132 and D171. The active site involves K194. D-ribose 5-phosphate is bound by residues R196 and D220.

It belongs to the ribose-phosphate pyrophosphokinase family. Class III (archaeal) subfamily. Mg(2+) serves as cofactor.

The protein resides in the cytoplasm. It carries out the reaction D-ribose 5-phosphate + ATP = 5-phospho-alpha-D-ribose 1-diphosphate + AMP + H(+). It participates in metabolic intermediate biosynthesis; 5-phospho-alpha-D-ribose 1-diphosphate biosynthesis; 5-phospho-alpha-D-ribose 1-diphosphate from D-ribose 5-phosphate (route I): step 1/1. In terms of biological role, involved in the biosynthesis of the central metabolite phospho-alpha-D-ribosyl-1-pyrophosphate (PRPP) via the transfer of pyrophosphoryl group from ATP to 1-hydroxyl of ribose-5-phosphate (Rib-5-P). The polypeptide is Ribose-phosphate pyrophosphokinase (Methanosarcina mazei (strain ATCC BAA-159 / DSM 3647 / Goe1 / Go1 / JCM 11833 / OCM 88) (Methanosarcina frisia)).